The chain runs to 559 residues: Non-homologous end joining factor IFFO1 (559 aa).

Residues 21 to 57 (GPLGDSLGGDHFAGGGDLPPAPLSPAGPAAYSPPGPG) form a disordered region. Positions 39 to 57 (PPAPLSPAGPAAYSPPGPG) are enriched in pro residues. The interval 65 to 116 (ALRNDLGSNINVLKTLNLRFRCFLAKVHELERRNRLLEKQLQQALEEGKQGR) is LMNA binding. An IF rod domain is found at 73–526 (NINVLKTLNL…RLITQSGDRK (454 aa)). A coiled-coil region spans residues 85 to 117 (RCFLAKVHELERRNRLLEKQLQQALEEGKQGRR). The interval 158 to 187 (SPARSPAGPLAPSAASLSSSSTSTSTTYSS) is disordered. A coiled-coil region spans residues 237 to 301 (EIRALYNVLA…LKVEQLKAEL (65 aa)). Residues 360 to 394 (SMGGRKRERKAAVEEDTSLSESEGPRQPDGDEEES) are disordered. The segment at 450–525 (EQEDSLEKVI…RRLITQSGDR (76 aa)) is XCCR4 binding. Required for localization to the double-strand breaks (DSBs). Residues 455–501 (LEKVIKDTESLFKTREKEYQETIDQIELELATAKNDMNRHLHEYMEM) adopt a coiled-coil conformation. Residues 520-559 (TQSGDRKSPAFTAVPLSDPPPPPSEAEDSDRDVSSDSSMR) form a disordered region. The span at 550–559 (RDVSSDSSMR) shows a compositional bias: basic and acidic residues.

It belongs to the intermediate filament family. Forms a heterotetramer with XRCC4. The interaction with XRCC4 is direct, involves LIG4-free XRCC4 and leads to relocalization of IFFO1 at the double-strand break (DSB) sites. Interacts with LMNA; the interaction forms an interior nucleoskeleton and the recruitment to DNA double-strand breaks. Ubiquitously expressed.

It localises to the nucleus. The protein localises to the nucleoplasm. The protein resides in the nucleus inner membrane. Its subcellular location is the nucleus matrix. Nuclear matrix protein involved in the immobilization of broken DNA ends and the suppression of chromosome translocation during DNA double-strand breaks (DSBs). Interacts with the nuclear lamina component LMNA, resulting in the formation of a nucleoskeleton that relocalizes to the DSB sites in a XRCC4-dependent manner and promotes the immobilization of the broken ends, thereby preventing chromosome translocation. Acts as a scaffold that allows the DNA repair protein XRCC4 and LMNA to assemble into a complex at the DSB sites. This chain is Non-homologous end joining factor IFFO1, found in Homo sapiens (Human).